Reading from the N-terminus, the 216-residue chain is Endoplasmic reticulum vesicle protein 25 (216 aa).

The N-terminal stretch at 1-21 (MMVSLKSSLFFMLALLTVVHA) is a signal peptide. At 22–184 (LNFDIPAKTN…TNESTNERVK (163 aa)) the chain is on the lumenal side. In terms of domain architecture, GOLD spans 34-150 (PFCLREYVGE…LEPVEADIRR (117 aa)). Residues 185–205 (NFAYLTFISLFVLVIWQILYL) form a helical membrane-spanning segment. At 206 to 216 (RSFFQRKHLIP) the chain is on the cytoplasmic side.

It belongs to the EMP24/GP25L family.

It is found in the endoplasmic reticulum membrane. Its subcellular location is the golgi apparatus membrane. Functionally, constituent of COPII-coated endoplasmic reticulum-derived transport vesicles. Required for efficient transport of a subset of secretory proteins to the Golgi. Facilitates retrograde transport from the Golgi to the endoplasmic reticulum. The chain is Endoplasmic reticulum vesicle protein 25 (erv25) from Schizosaccharomyces pombe (strain 972 / ATCC 24843) (Fission yeast).